A 388-amino-acid chain; its full sequence is Succinate--CoA ligase [ADP-forming] subunit beta (388 aa).

One can recognise an ATP-grasp domain in the interval 9–244 (KQLFARYGLP…PSQEDPREAQ (236 aa)). ATP-binding positions include Lys-46, 53–55 (GRG), Glu-99, Thr-102, and Glu-107. Mg(2+)-binding residues include Asn-199 and Asp-213. Substrate is bound by residues Asn-264 and 321-323 (GIV).

It belongs to the succinate/malate CoA ligase beta subunit family. Heterotetramer of two alpha and two beta subunits. Requires Mg(2+) as cofactor.

The catalysed reaction is succinate + ATP + CoA = succinyl-CoA + ADP + phosphate. The enzyme catalyses GTP + succinate + CoA = succinyl-CoA + GDP + phosphate. Its pathway is carbohydrate metabolism; tricarboxylic acid cycle; succinate from succinyl-CoA (ligase route): step 1/1. In terms of biological role, succinyl-CoA synthetase functions in the citric acid cycle (TCA), coupling the hydrolysis of succinyl-CoA to the synthesis of either ATP or GTP and thus represents the only step of substrate-level phosphorylation in the TCA. The beta subunit provides nucleotide specificity of the enzyme and binds the substrate succinate, while the binding sites for coenzyme A and phosphate are found in the alpha subunit. This Photorhabdus laumondii subsp. laumondii (strain DSM 15139 / CIP 105565 / TT01) (Photorhabdus luminescens subsp. laumondii) protein is Succinate--CoA ligase [ADP-forming] subunit beta.